A 1040-amino-acid chain; its full sequence is Multidrug resistance protein MdtB (1040 aa).

A run of 12 helical transmembrane segments spans residues 25-45 (LLMV…PVSA), 347-367 (LMMA…NIPA), 369-389 (IIPG…MVFL), 396-416 (LTLM…IVVI), 440-460 (IGFT…PLLF), 472-492 (FAIT…TLTP), 537-557 (WLTL…WVFI), 863-883 (LGST…VLGI), 888-908 (FIHP…ALLA), 911-931 (IAGS…IGIV), 968-988 (ILMT…STGV), and 998-1018 (IGMV…TPVI).

Belongs to the resistance-nodulation-cell division (RND) (TC 2.A.6) family. MdtB subfamily. In terms of assembly, part of a tripartite efflux system composed of MdtA, MdtB and MdtC. MdtB forms a heteromultimer with MdtC.

It localises to the cell inner membrane. In terms of biological role, the MdtABC tripartite complex confers resistance against novobiocin and deoxycholate. This chain is Multidrug resistance protein MdtB, found in Escherichia coli O127:H6 (strain E2348/69 / EPEC).